Reading from the N-terminus, the 107-residue chain is Large ribosomal subunit protein uL24 (107 aa).

The protein belongs to the universal ribosomal protein uL24 family. Part of the 50S ribosomal subunit.

In terms of biological role, one of two assembly initiator proteins, it binds directly to the 5'-end of the 23S rRNA, where it nucleates assembly of the 50S subunit. One of the proteins that surrounds the polypeptide exit tunnel on the outside of the subunit. The sequence is that of Large ribosomal subunit protein uL24 from Malacoplasma penetrans (strain HF-2) (Mycoplasma penetrans).